Here is a 421-residue protein sequence, read N- to C-terminus: UDP-N-acetylglucosamine 1-carboxyvinyltransferase (421 aa).

Residue 22–23 coordinates phosphoenolpyruvate; it reads KN. Arg-93 contributes to the UDP-N-acetyl-alpha-D-glucosamine binding site. The active-site Proton donor is Cys-117. 2-(S-cysteinyl)pyruvic acid O-phosphothioketal is present on Cys-117. UDP-N-acetyl-alpha-D-glucosamine contacts are provided by residues 122–126, Asp-308, and Leu-330; that span reads RPVDL.

It belongs to the EPSP synthase family. MurA subfamily.

It is found in the cytoplasm. It carries out the reaction phosphoenolpyruvate + UDP-N-acetyl-alpha-D-glucosamine = UDP-N-acetyl-3-O-(1-carboxyvinyl)-alpha-D-glucosamine + phosphate. It participates in cell wall biogenesis; peptidoglycan biosynthesis. Cell wall formation. Adds enolpyruvyl to UDP-N-acetylglucosamine. This Helicobacter hepaticus (strain ATCC 51449 / 3B1) protein is UDP-N-acetylglucosamine 1-carboxyvinyltransferase.